We begin with the raw amino-acid sequence, 339 residues long: tRNA dimethylallyltransferase (339 aa).

36–43 (GPTGSGKT) contacts ATP. 38–43 (TGSGKT) lines the substrate pocket. Residues 61-64 (DSMQ) form an interaction with substrate tRNA region.

Belongs to the IPP transferase family. Monomer. Mg(2+) is required as a cofactor.

It catalyses the reaction adenosine(37) in tRNA + dimethylallyl diphosphate = N(6)-dimethylallyladenosine(37) in tRNA + diphosphate. In terms of biological role, catalyzes the transfer of a dimethylallyl group onto the adenine at position 37 in tRNAs that read codons beginning with uridine, leading to the formation of N6-(dimethylallyl)adenosine (i(6)A). The sequence is that of tRNA dimethylallyltransferase from Chlamydia trachomatis serovar A (strain ATCC VR-571B / DSM 19440 / HAR-13).